Reading from the N-terminus, the 366-residue chain is ADP-ribosylarginine hydrolase Tri1 (366 aa).

Residues 1–65 (MIDLREDTWT…LNTPPCLIPE (65 aa)) are N-terminal extension. The segment at 74 to 366 (GALVGLAIGD…LFYMAPEEDF (293 aa)) is ADP-ribosyl hydrolase domain. Mg(2+) contacts are provided by Thr116, Asp117, Asp118, Asp161, and Asp317.

Belongs to the ADP-ribosylglycohydrolase family. In terms of assembly, forms a stable complex with cognate effector protein Tre1-Sp. The cofactor is Mg(2+).

The catalysed reaction is N(omega)-(ADP-D-ribosyl)-L-arginyl-[protein] + H2O = ADP-D-ribose + L-arginyl-[protein]. Immunity component of a contact-dependent interbacterial competition system (also called effector-immunity systems). Acts as an arginine mono-ADP-ribosylhydrolase, mediating the removal of mono-ADP-ribose attached to arginine residues on proteins. De-ADP-ribosylates FtsZ, is able to act on other proteins as well. Neutralizes the toxic activity of cognate toxin Tre1-Sp. Expression of this protein alone in E.coli partially protects the cells against competition by wild-type S.proteamaculans. Neutralizes Tre1-Sp both by occluding its active site via its N-terminal extension and by hydrolyzing the ADP-ribosyl moiety from FtsZ; the 2 activities are dissociable by mutagenesis. The chain is ADP-ribosylarginine hydrolase Tri1 from Serratia proteamaculans (strain 568).